The chain runs to 783 residues: Zinc finger protein 107 (783 aa).

Residues 76–98 (FQCNKYVKVFDKFSNSNRYKRRH) form a C2H2-type 1; atypical zinc finger. 3 consecutive C2H2-type zinc fingers follow at residues 104 to 126 (FKCKECSKSFCVLSQLTQHRRIH), 132 to 154 (YKCEECGKAFNWFSTLTKHKRIH), and 160 to 182 (YKCEECGKAFNQSSQLTRHKIIH). K186 participates in a covalent cross-link: Glycyl lysine isopeptide (Lys-Gly) (interchain with G-Cter in SUMO2). The C2H2-type 5 zinc finger occupies 188-210 (NKCEECGKAFKQASHLTIHKIIH). The C2H2-type 6; atypical zinc finger occupies 216-238 (YKYEECGKVFSQSSHLTTQKILH). A C2H2-type 7 zinc finger spans residues 244–266 (YKCKECGKAFNLFSNLTNHKRIH). A C2H2-type 8; atypical zinc finger spans residues 272 to 294 (YKCKECGRAFNISSNLNKQEKIH). Residues 300–322 (NKCEECDKAFNRSLKLTAHKKIL) form a C2H2-type 9; atypical zinc finger. 2 C2H2-type zinc fingers span residues 328–350 (YKCEECGKVFNQFSTLTRHKIIH) and 356–378 (YKCKECGKAFNQSSNLTEHKKIH). The C2H2-type 12; atypical zinc-finger motif lies at 384–406 (YKCEECGKAFNQHSNLINHRKIY). 4 C2H2-type zinc fingers span residues 412–434 (YKCEECGKAFNRSSTLTRHKKIH), 440–462 (YKCEECDRAFSQSSNLTEHKKIH), 468–490 (YKCEECGKAFNRFSTLTKHKRIH), and 496–518 (YKCEECGKAFNQSYQLTRHKIVH). A C2H2-type 17; atypical zinc finger spans residues 524-546 (NKCEEFGKAFKQSSHRTIHKIIH). The segment at 552-574 (YKCEEHGKVFNQSSNLTTQKIIH) adopts a C2H2-type 18; atypical zinc-finger fold. The C2H2-type 19; atypical zinc finger occupies 580–602 (YKFEEHGKAFNLFSNITNHKIIY). C2H2-type zinc fingers lie at residues 608 to 630 (HKCEECGKAYNRFSNLTIHKRIH), 636 to 658 (YQCAECGKAFNCSSTLNRHKIIH), 664 to 686 (YKCKECGKAFNLSSTLTAHKKIH), 692 to 714 (YKCEECGKAFNQSSNLTTHKKIH), and 720 to 742 (YKCEECGKSFNQFSSLNIHKIIH). The C2H2-type 25; atypical zinc-finger motif lies at 748–770 (YKCGDYGRAFNLSSNLTTHKKIH).

The protein belongs to the krueppel C2H2-type zinc-finger protein family. In terms of tissue distribution, expressed in brain, heart, skeletal muscle, kidney and pancreas. Weakly expressed in aorta, liver and lung.

It localises to the nucleus. May be involved in transcriptional regulation. This is Zinc finger protein 107 (ZNF107) from Homo sapiens (Human).